A 32-amino-acid polypeptide reads, in one-letter code: Secreted protein F2 (32 aa).

The protein resides in the secreted. This chain is Secreted protein F2, found in Globisporangium hypogynum (Pythium hypogynum).